A 261-amino-acid chain; its full sequence is MICOS complex subunit Mic25 (261 aa).

Gly2 carries the N-myristoyl glycine lipid modification. A phosphoserine mark is found at Ser13, Ser31, and Ser33. 3 disordered regions span residues 39 to 59, 81 to 114, and 140 to 165; these read KDCS…PECS, CGPA…VKED, and TEKH…RLTR. Residues 109–202 adopt a coiled-coil conformation; sequence SAVKEDLKKF…AELYKLSSQQ (94 aa). Residues 154–165 are compositionally biased toward basic and acidic residues; that stretch reads THEQQQSDRLTR. The CHCH domain occupies 220-261; that stretch reads EPVCSGLQAQILRCYRDHLHEVLLCSDLAKAYQHCVSTARKG. 2 consecutive short sequence motifs (cx9C motif) follow at residues 223–233 and 244–254; these read CSGLQAQILRC and CSDLAKAYQHC. 2 cysteine pairs are disulfide-bonded: Cys223–Cys254 and Cys233–Cys244.

Belongs to the MICOS complex subunit Mic19 family. Metazoan Mic25 subfamily. In terms of assembly, component of the mitochondrial contact site and cristae organizing system (MICOS) complex, composed of at least MICOS10/MIC10, CHCHD3/MIC19, CHCHD6/MIC25, APOOL/MIC27, IMMT/MIC60, APOO/MIC23/MIC26 and MICOS13/MIC13. This complex was also known under the names MINOS or MitOS complex. The MICOS complex associates with mitochondrial outer membrane proteins SAMM50, MTX1 and MTX2 (together described as components of the mitochondrial outer membrane sorting assembly machinery (SAM) complex) and DNAJC11, mitochondrial inner membrane protein TMEM11 and with HSPA9. The MICOS and SAM complexes together with DNAJC11 are part of a large protein complex spanning both membranes termed the mitochondrial intermembrane space bridging (MIB) complex. Interacts with DISC1. Interacts with IMMT/MIC60.

The protein localises to the mitochondrion inner membrane. The protein resides in the mitochondrion. Component of the MICOS complex, a large protein complex of the mitochondrial inner membrane that plays crucial roles in the maintenance of crista junctions, inner membrane architecture, and formation of contact sites to the outer membrane. The chain is MICOS complex subunit Mic25 (Chchd6) from Rattus norvegicus (Rat).